The chain runs to 375 residues: Trichodiene synthase (375 aa).

Belongs to the trichodiene synthase family.

The enzyme catalyses (2E,6E)-farnesyl diphosphate = trichodiene + diphosphate. The protein operates within sesquiterpene biosynthesis; trichothecene biosynthesis. Its function is as follows. TS is a member of the terpene cyclase group of enzymes. It catalyzes the isomerization and cyclization of farnesyl pyro-phosphate to form trichodiene, the first cyclic intermediate in the biosynthetic pathway for trichothecenes. It serves to branch trichothecene biosynthesis from the isoprenoid pathway. The polypeptide is Trichodiene synthase (TRI5) (Fusarium asiaticum).